The primary structure comprises 289 residues: Esterase GA18864 (289 aa).

A compositionally biased stretch (low complexity) spans 1-19; it reads MTNNDAAVEAPSSSRASSS. The segment at 1-24 is disordered; sequence MTNNDAAVEAPSSSRASSSKQQPK. Residues Ser-133, Asp-191, and His-218 each act as charge relay system in the active site. Residues 253 to 289 form a disordered region; sequence VSFIESGAEDNDDDGDANDAEVAAATAAAGSDLDDSD. Residues 259-271 are compositionally biased toward acidic residues; the sequence is GAEDNDDDGDAND. The segment covering 272–283 has biased composition (low complexity); that stretch reads AEVAAATAAAGS.

It belongs to the LovG family.

This chain is Esterase GA18864, found in Drosophila pseudoobscura pseudoobscura (Fruit fly).